We begin with the raw amino-acid sequence, 166 residues long: Large ribosomal subunit protein mL49 (166 aa).

The interval 56 to 78 is disordered; the sequence is RIPDPPKHEHYPTPSGWQPPRDP.

It belongs to the mitochondrion-specific ribosomal protein mL49 family. Component of the mitochondrial large ribosomal subunit (mt-LSU). Mature mammalian 55S mitochondrial ribosomes consist of a small (28S) and a large (39S) subunit. The 28S small subunit contains a 12S ribosomal RNA (12S mt-rRNA) and 30 different proteins. The 39S large subunit contains a 16S rRNA (16S mt-rRNA), a copy of mitochondrial valine transfer RNA (mt-tRNA(Val)), which plays an integral structural role, and 52 different proteins. Interacts with OXA1L. Ubiquitous.

The protein resides in the mitochondrion. This Homo sapiens (Human) protein is Large ribosomal subunit protein mL49 (MRPL49).